The primary structure comprises 261 residues: MAAIAIPENTRVFLLDIEGTTTPITFVKDILFPYIRENLEDYLSAHWEEDECKQDVHLLKKQTEEDLRQNKACHVHTVDQTVHTDEEKAIREVVENVLWQMAADRKTTALKQLQGHMWRAAYMMGRIKGEVYQDVVPAIRRWRHHGLKIYIYSSGSVEAQKLLFGYSVQGDILDLFDGHFDTNIGAKVESKSYENIAERIGCQPEEIMFLTDVTREAKAAEDAGVNVAVVVRPGNMELTEEERDHYRIITSFNQLELIGNV.

The Mg(2+) site is built by D16 and E18. Substrate-binding positions include 153–154 (SS) and K187. Residue D212 coordinates Mg(2+).

The protein belongs to the HAD-like hydrolase superfamily. MasA/MtnC family. Monomer. Requires Mg(2+) as cofactor.

It localises to the cytoplasm. The protein resides in the nucleus. The catalysed reaction is 5-methylsulfanyl-2,3-dioxopentyl phosphate + H2O = 1,2-dihydroxy-5-(methylsulfanyl)pent-1-en-3-one + phosphate. The protein operates within amino-acid biosynthesis; L-methionine biosynthesis via salvage pathway; L-methionine from S-methyl-5-thio-alpha-D-ribose 1-phosphate: step 3/6. Its pathway is amino-acid biosynthesis; L-methionine biosynthesis via salvage pathway; L-methionine from S-methyl-5-thio-alpha-D-ribose 1-phosphate: step 4/6. In terms of biological role, bifunctional enzyme that catalyzes the enolization of 2,3-diketo-5-methylthiopentyl-1-phosphate (DK-MTP-1-P) into the intermediate 2-hydroxy-3-keto-5-methylthiopentenyl-1-phosphate (HK-MTPenyl-1-P), which is then dephosphorylated to form the acireductone 1,2-dihydroxy-3-keto-5-methylthiopentene (DHK-MTPene). In Danio rerio (Zebrafish), this protein is Enolase-phosphatase E1 (enoph1).